A 79-amino-acid polypeptide reads, in one-letter code: Translational regulator CsrA (79 aa).

The protein belongs to the CsrA/RsmA family. Homodimer; the beta-strands of each monomer intercalate to form a hydrophobic core, while the alpha-helices form wings that extend away from the core.

The protein localises to the cytoplasm. Functionally, a translational regulator that binds mRNA to regulate translation initiation and/or mRNA stability. Usually binds in the 5'-UTR at or near the Shine-Dalgarno sequence preventing ribosome-binding, thus repressing translation. Its main target seems to be the major flagellin gene, while its function is anatagonized by FliW. The chain is Translational regulator CsrA from Leptospira biflexa serovar Patoc (strain Patoc 1 / Ames).